A 143-amino-acid chain; its full sequence is Root meristem growth factor 10 (143 aa).

Residues 1–27 (MDMLRSACFYFLLIVFVILSWSLLCDS) form the signal peptide. Positions 28-130 (RHLGHMEKKL…SDQEHPGFNL (103 aa)) are excised as a propeptide. A glycan (N-linked (GlcNAc...) asparagine) is linked at asparagine 60. Residues 74 to 83 (NHGDNGQING) are compositionally biased toward polar residues. Residues 74–143 (NHGDNGQING…QPTTHPPHHN (70 aa)) form a disordered region. A Nuclear localization signal motif is present at residues 92-99 (VKRASDKK). Tyrosine 132 bears the Sulfotyrosine mark. Position 140 is a hydroxyproline (proline 140).

Belongs to the RGF family. As to quaternary structure, binds to LRR receptor-like serine/threonine-protein kinases RGI1, RGI2 and RGI3 to trigger their dimerization with SERK proteins and subsequent signaling. Post-translationally, the tyrosine sulfation is critical for the function of the peptide. Expressed in root tips.

The protein resides in the secreted. The protein localises to the nucleus. Maintains the postembryonic root stem cell niche by regulating the expression levels and patterns of the transcription factor PLETHORA (PLT), mainly at the post-transcriptional level. Promotes root elongation. This Arabidopsis thaliana (Mouse-ear cress) protein is Root meristem growth factor 10.